The sequence spans 427 residues: MRRIRLNLQNAINEEKLKEYVSEVEQINTKMNNLSLEGFEYLGWKDLPENINKNEIDKIIETANFFKKEGIEVLVVIGIGGSFLGAKSAMDFIQGNYPTKKNMEIIFAGTSISSTELTQLLYYVENKKFAINVISKSGTTLEPAIAFREFRNLLNSRLGENNAKRYIVATTDANKGLLFEMAKEKGYARFVVPDNVGGRFSVLTPVGLLPLACAGIDIEKLLEGAKEANALYKNSNLLENDAYKYAVARFLLQKKFPVEMLVSYEPNHMFLLEWWKQLFGESEGKQGKGILPHSAIFTRDLHSLGQFIQDGSKIMFETVIWVDKPIFDLKIEKEIEDLDKLNYLTNKSLHQINKAAFEATVEAHTKVGLVPNIILELEDSSEKTLGALFMFFERAVAMSGYLLKVNPFNQPGVEVYKSNLFKILEKK.

Glu281 functions as the Proton donor in the catalytic mechanism. Catalysis depends on residues His302 and Lys417.

It belongs to the GPI family.

Its subcellular location is the cytoplasm. It catalyses the reaction alpha-D-glucose 6-phosphate = beta-D-fructose 6-phosphate. It functions in the pathway carbohydrate biosynthesis; gluconeogenesis. It participates in carbohydrate degradation; glycolysis; D-glyceraldehyde 3-phosphate and glycerone phosphate from D-glucose: step 2/4. Catalyzes the reversible isomerization of glucose-6-phosphate to fructose-6-phosphate. The protein is Glucose-6-phosphate isomerase of Mycoplasmopsis pulmonis (strain UAB CTIP) (Mycoplasma pulmonis).